Reading from the N-terminus, the 319-residue chain is Cobalamin biosynthesis protein CbiB (319 aa).

Transmembrane regions (helical) follow at residues 56-76 (VMWI…LALA), 82-102 (WLGW…RSLA), 153-173 (VDGI…LAMA), 204-224 (VANY…AGLC), and 296-316 (LMWG…CWLS).

This sequence belongs to the CobD/CbiB family.

It localises to the cell membrane. It participates in cofactor biosynthesis; adenosylcobalamin biosynthesis. Its function is as follows. Converts cobyric acid to cobinamide by the addition of aminopropanol on the F carboxylic group. However, the true cosubstrate could be (R)-1-amino-2-propanol O-2-phosphate, leading to cobinamide phosphate. This Salmonella arizonae (strain ATCC BAA-731 / CDC346-86 / RSK2980) protein is Cobalamin biosynthesis protein CbiB.